Here is a 1341-residue protein sequence, read N- to C-terminus: DNA-directed RNA polymerase subunit beta (1341 aa).

This sequence belongs to the RNA polymerase beta chain family. As to quaternary structure, the RNAP catalytic core consists of 2 alpha, 1 beta, 1 beta' and 1 omega subunit. When a sigma factor is associated with the core the holoenzyme is formed, which can initiate transcription.

The enzyme catalyses RNA(n) + a ribonucleoside 5'-triphosphate = RNA(n+1) + diphosphate. In terms of biological role, DNA-dependent RNA polymerase catalyzes the transcription of DNA into RNA using the four ribonucleoside triphosphates as substrates. This Pseudoalteromonas translucida (strain TAC 125) protein is DNA-directed RNA polymerase subunit beta.